Here is a 492-residue protein sequence, read N- to C-terminus: Ketol-acid reductoisomerase (NADP(+)) (492 aa).

The KARI N-terminal Rossmann domain occupies 15–208 (AQLGKCRFMA…GAHRAGVLES (194 aa)). NADP(+)-binding positions include 45 to 48 (CGAQ), R68, R76, S78, and 108 to 110 (DKQ). H132 is an active-site residue. G158 contacts NADP(+). 2 consecutive KARI C-terminal knotted domains span residues 209 to 344 (SFVA…NSPE) and 345 to 485 (YDGK…MTDM). Positions 217, 221, 389, and 393 each coordinate Mg(2+). Residue S414 participates in substrate binding.

The protein belongs to the ketol-acid reductoisomerase family. It depends on Mg(2+) as a cofactor.

The catalysed reaction is (2R)-2,3-dihydroxy-3-methylbutanoate + NADP(+) = (2S)-2-acetolactate + NADPH + H(+). It carries out the reaction (2R,3R)-2,3-dihydroxy-3-methylpentanoate + NADP(+) = (S)-2-ethyl-2-hydroxy-3-oxobutanoate + NADPH + H(+). It participates in amino-acid biosynthesis; L-isoleucine biosynthesis; L-isoleucine from 2-oxobutanoate: step 2/4. Its pathway is amino-acid biosynthesis; L-valine biosynthesis; L-valine from pyruvate: step 2/4. Its function is as follows. Involved in the biosynthesis of branched-chain amino acids (BCAA). Catalyzes an alkyl-migration followed by a ketol-acid reduction of (S)-2-acetolactate (S2AL) to yield (R)-2,3-dihydroxy-isovalerate. In the isomerase reaction, S2AL is rearranged via a Mg-dependent methyl migration to produce 3-hydroxy-3-methyl-2-ketobutyrate (HMKB). In the reductase reaction, this 2-ketoacid undergoes a metal-dependent reduction by NADPH to yield (R)-2,3-dihydroxy-isovalerate. The chain is Ketol-acid reductoisomerase (NADP(+)) from Photorhabdus laumondii subsp. laumondii (strain DSM 15139 / CIP 105565 / TT01) (Photorhabdus luminescens subsp. laumondii).